A 192-amino-acid chain; its full sequence is 21.7 kDa class VI heat shock protein (192 aa).

In terms of domain architecture, sHSP spans 80-192 (SLRSLGQCRV…IPKINSKNKF (113 aa)).

This sequence belongs to the small heat shock protein (HSP20) family. In terms of assembly, may form oligomeric structures.

The protein localises to the cytoplasm. This is 21.7 kDa class VI heat shock protein (HSP21.7) from Arabidopsis thaliana (Mouse-ear cress).